Here is a 778-residue protein sequence, read N- to C-terminus: Actin-binding LIM protein 1 (778 aa).

4 LIM zinc-binding domains span residues 97-156, 156-216, 224-283, and 283-343; these read IHCH…MYGT, TRCH…MSSS, SNCA…LFGV, and VKCE…TKTE. Serine 216 carries the phosphoserine modification. A disordered region spans residues 339–370; the sequence is STKTEEKLRPTRTSSESIYSRPGSSIPGSPGH. The segment covering 360–369 has biased composition (low complexity); the sequence is PGSSIPGSPG. Position 367 is a phosphoserine (serine 367). Phosphotyrosine occurs at positions 373 and 396. 2 disordered regions span residues 414-510 and 552-597; these read YDDK…QAPK and AAQA…EELL. Phosphoserine is present on residues serine 422, serine 426, and serine 431. Over residues 423-434 the composition is skewed to polar residues; that stretch reads LGESPRTLSPTP. Residue threonine 433 is modified to Phosphothreonine. A Phosphoserine modification is found at serine 435. Tyrosine 439 bears the Phosphotyrosine mark. A compositionally biased stretch (polar residues) spans 449-474; that stretch reads RSTSQGSINSPVYSRHSYTPTTSRSP. A phosphoserine mark is found at serine 452, serine 455, serine 458, serine 498, and serine 587. Residues 590–614 adopt a coiled-coil conformation; the sequence is EEDDEELLRRRQLQEEQLMKLNSGL. A Glycyl lysine isopeptide (Lys-Gly) (interchain with G-Cter in SUMO2) cross-link involves residue lysine 620. Phosphoserine is present on residues serine 640, serine 655, serine 677, and serine 706. Positions 710-778 constitute an HP domain; the sequence is MLEPKIFPYE…NDMKKKAKLF (69 aa).

Binds F-actin. Interacts with ABRA. In terms of tissue distribution, detected in liver, heart, skeletal muscle, brain and retina, where it is concentrated in the inner segment and in the outer plexiform layers.

The protein localises to the cytoplasm. The protein resides in the cytoskeleton. Its function is as follows. May act as scaffold protein. May play a role in the development of the retina. Has been suggested to play a role in axon guidance. The sequence is that of Actin-binding LIM protein 1 (ABLIM1) from Homo sapiens (Human).